A 308-amino-acid polypeptide reads, in one-letter code: D-alanine--D-alanine ligase (308 aa).

Positions 105-302 constitute an ATP-grasp domain; that stretch reads KAIFRSLGLA…FPDLCERILD (198 aa). 133–188 is an ATP binding site; it reads DLPFGLPCVVKPAGEGSSVGVHLVNEAAELGPACRDAASHAGDVIVERYVKGTEVD. Residues aspartate 256, glutamate 269, and asparagine 271 each contribute to the Mg(2+) site.

The protein belongs to the D-alanine--D-alanine ligase family. The cofactor is Mg(2+). It depends on Mn(2+) as a cofactor.

It localises to the cytoplasm. The enzyme catalyses 2 D-alanine + ATP = D-alanyl-D-alanine + ADP + phosphate + H(+). Its pathway is cell wall biogenesis; peptidoglycan biosynthesis. In terms of biological role, cell wall formation. In Anaeromyxobacter dehalogenans (strain 2CP-1 / ATCC BAA-258), this protein is D-alanine--D-alanine ligase.